The primary structure comprises 260 residues: Magnesium dechelatase SGRL, chloroplastic (260 aa).

A chloroplast-targeting transit peptide spans 1-45 (MACYIVPYYHHPVLSHPNREIFSHRHHHHHRFCNNLLNRRISVPR).

This sequence belongs to the staygreen family. Interacts with the light harvesting complex II (LHCII). Interacts with the chlorophyll catabolic enzymes (CCEs) NYC1, NOL, PAO and RCCR. Expressed in cotyledons, pollen and young leaves.

It localises to the plastid. The protein resides in the chloroplast thylakoid. It catalyses the reaction chlorophyllide a + 2 H(+) = pheophorbide a + Mg(2+). Functionally, magnesium chelatase involved in chlorophyll a degradation in the chlorophyll-protein complexes of photosystem I (PSI) and photosystem II (PSII). Contributes to the degradation of PSI and PSII in the thylakoid membranes. Recombinant SGRL possesses high dechelating activity against chlorophyllide a, very low activity against chlorophyll a, and no activity against chlorophyll b. Contributes to abiotic stress-induced chlorophyll degradation and leaf yellowing during vegetative plant growth. In Arabidopsis thaliana (Mouse-ear cress), this protein is Magnesium dechelatase SGRL, chloroplastic.